We begin with the raw amino-acid sequence, 266 residues long: Blue copper protein (266 aa).

A signal peptide spans 1–24 (MAYSKILFCFMIGFVGFLPAITMA). Phytocyanin domains follow at residues 25–56 (TQYLVGDDRGWTLDFDYQTWAKNKTFKVGDTL), 57–102 (APPP…TVED), and 116–216 (TEYW…TVEG). N-linked (GlcNAc...) asparagine glycosylation occurs at Asn-47. His-156 lines the Cu cation pocket. An N-linked (GlcNAc...) asparagine glycan is attached at Asn-162. Residues Cys-169 and Cys-203 are joined by a disulfide bond. Cu cation-binding residues include Cys-197, His-202, and Gln-208. Residues 245-265 (ITSPYKMFVGGAVSIWTILTL) form a helical membrane-spanning segment.

The protein resides in the membrane. This chain is Blue copper protein, found in Petunia hybrida (Petunia).